Here is a 1266-residue protein sequence, read N- to C-terminus: Phosphatidylinositol 3,4,5-trisphosphate 5-phosphatase 2A (1266 aa).

Residues 15 to 111 enclose the SH2 domain; it reads WMHRDLSRAA…GLVTTLLYPV (97 aa). Residues 114–123 are compositionally biased toward basic and acidic residues; sequence EETTEDRDYS. Disordered stretches follow at residues 114–159 and 879–951; these read EETT…NVTA and DMGG…DATT. Positions 136–159 are enriched in polar residues; sequence TASTSSMTGSALVSTDTPPENVTA. Basic and acidic residues-rich tracts occupy residues 915 to 924 and 931 to 944; these read RVSEEGEKSS and TKEE…KQDP. Residues 958–961 carry the NPXY motif motif; it reads NPAY. Residue Tyr-961 is modified to Phosphotyrosine. Disordered stretches follow at residues 986–1132 and 1147–1174; these read PLAN…SALD and EVEY…SFPS. A compositionally biased stretch (low complexity) spans 994–1012; the sequence is PPAGSVGKSKPPSGSSAQG. The segment covering 1045–1056 has biased composition (pro residues); sequence RPPPDFPPPPLP. The region spanning 1203-1266 is the SAM domain; that stretch reads SVDCSVGEWL…LLASLKQQQK (64 aa).

Belongs to the inositol 1,4,5-trisphosphate 5-phosphatase family. Tyrosine phosphorylated by the members of the SRC family after exposure to a diverse array of extracellular stimuli.

It is found in the cytoplasm. Its subcellular location is the cytosol. The protein localises to the cytoskeleton. It localises to the membrane. The protein resides in the cell projection. It is found in the filopodium. Its subcellular location is the lamellipodium. The protein localises to the nucleus. It localises to the nucleus speckle. It carries out the reaction a 1,2-diacyl-sn-glycero-3-phospho-(1D-myo-inositol-3,4,5-trisphosphate) + H2O = a 1,2-diacyl-sn-glycero-3-phospho-(1D-myo-inositol-3,4-bisphosphate) + phosphate. In terms of biological role, phosphatidylinositol (PtdIns) phosphatase that specifically hydrolyzes the 5-phosphate of phosphatidylinositol-3,4,5-trisphosphate (PtdIns(3,4,5)P3) to produce PtdIns(3,4)P2, thereby negatively regulating the PI3K (phosphoinositide 3-kinase) pathways. Plays a central role in regulation of PI3K-dependent insulin signaling, although the precise molecular mechanisms and signaling pathways remain unclear. Part of a signaling pathway that regulates actin cytoskeleton remodeling. Required for the maintenance and dynamic remodeling of actin structures as well as in endocytosis, having a major impact on ligand-induced EGFR internalization and degradation. Participates in regulation of cortical and submembraneous actin. Regulates cell adhesion and cell spreading. Acts as a negative regulator of the FC-gamma-RIIA receptor (FCGR2A). Mediates signaling from the FC-gamma-RIIB receptor (FCGR2B), playing a central role in terminating signal transduction from activating immune/hematopoietic cell receptor systems. May also hydrolyze PtdIns(1,3,4,5)P4, and could thus affect the levels of the higher inositol polyphosphates like InsP6. This Danio rerio (Zebrafish) protein is Phosphatidylinositol 3,4,5-trisphosphate 5-phosphatase 2A (inppl1a).